The sequence spans 25 residues: Caerin-2.2 (25 aa).

The protein belongs to the frog skin active peptide (FSAP) family. Caerin subfamily. As to expression, expressed by the skin parotoid and/or rostral glands.

Its subcellular location is the secreted. Antimicrobial peptide, that adopts an alpha helical conformation which can disrupt bacterial membranes. Each caerin displays a different antimicrobial specificity. The polypeptide is Caerin-2.2 (Ranoidea caerulea (Green tree frog)).